Reading from the N-terminus, the 307-residue chain is Aspartate carbamoyltransferase catalytic subunit (307 aa).

Carbamoyl phosphate contacts are provided by arginine 56 and threonine 57. Residue lysine 84 coordinates L-aspartate. Carbamoyl phosphate-binding residues include arginine 106, histidine 136, and glutamine 139. Arginine 169 and arginine 221 together coordinate L-aspartate. Carbamoyl phosphate-binding residues include alanine 262 and proline 263.

The protein belongs to the aspartate/ornithine carbamoyltransferase superfamily. ATCase family. In terms of assembly, heterododecamer (2C3:3R2) of six catalytic PyrB chains organized as two trimers (C3), and six regulatory PyrI chains organized as three dimers (R2).

The enzyme catalyses carbamoyl phosphate + L-aspartate = N-carbamoyl-L-aspartate + phosphate + H(+). The protein operates within pyrimidine metabolism; UMP biosynthesis via de novo pathway; (S)-dihydroorotate from bicarbonate: step 2/3. Catalyzes the condensation of carbamoyl phosphate and aspartate to form carbamoyl aspartate and inorganic phosphate, the committed step in the de novo pyrimidine nucleotide biosynthesis pathway. This chain is Aspartate carbamoyltransferase catalytic subunit, found in Streptococcus pneumoniae (strain JJA).